We begin with the raw amino-acid sequence, 323 residues long: Acetyl-coenzyme A carboxylase carboxyl transferase subunit alpha (323 aa).

A CoA carboxyltransferase C-terminal domain is found at 39 to 293 (RLSKKSQQLT…RRALADSLRQ (255 aa)).

This sequence belongs to the AccA family. In terms of assembly, acetyl-CoA carboxylase is a heterohexamer composed of biotin carboxyl carrier protein (AccB), biotin carboxylase (AccC) and two subunits each of ACCase subunit alpha (AccA) and ACCase subunit beta (AccD).

The protein localises to the cytoplasm. The enzyme catalyses N(6)-carboxybiotinyl-L-lysyl-[protein] + acetyl-CoA = N(6)-biotinyl-L-lysyl-[protein] + malonyl-CoA. The protein operates within lipid metabolism; malonyl-CoA biosynthesis; malonyl-CoA from acetyl-CoA: step 1/1. In terms of biological role, component of the acetyl coenzyme A carboxylase (ACC) complex. First, biotin carboxylase catalyzes the carboxylation of biotin on its carrier protein (BCCP) and then the CO(2) group is transferred by the carboxyltransferase to acetyl-CoA to form malonyl-CoA. The polypeptide is Acetyl-coenzyme A carboxylase carboxyl transferase subunit alpha (Burkholderia vietnamiensis (strain G4 / LMG 22486) (Burkholderia cepacia (strain R1808))).